A 192-amino-acid polypeptide reads, in one-letter code: MKPALILASESPRRKQLLSEAGFSFDVVPVKVSEIPNKNLNVNDQILDIARRKASAALPLLKSSRQDAFIVLCADTEVIFNGAPLGKPADRQDAYRILKLLSGKYHEVITAVCLVESSTGKEVSQTETTKIYFRQLTDDEIWTYIDTGEPMDKAGAYGIQGQGGKFIERFDGPFYNVVGLPIDLVKNLLSKF.

Residue aspartate 75 is the Proton acceptor of the active site.

It belongs to the Maf family. YhdE subfamily. Requires a divalent metal cation as cofactor.

It is found in the cytoplasm. The catalysed reaction is dTTP + H2O = dTMP + diphosphate + H(+). The enzyme catalyses UTP + H2O = UMP + diphosphate + H(+). Functionally, nucleoside triphosphate pyrophosphatase that hydrolyzes dTTP and UTP. May have a dual role in cell division arrest and in preventing the incorporation of modified nucleotides into cellular nucleic acids. The chain is dTTP/UTP pyrophosphatase from Bdellovibrio bacteriovorus (strain ATCC 15356 / DSM 50701 / NCIMB 9529 / HD100).